A 483-amino-acid chain; its full sequence is Zinc metalloproteinase/disintegrin (483 aa).

The first 20 residues, 1-20 (MIQVLLVTVCLAVFPYQGSS), serve as a signal peptide directing secretion. Residues 21-190 (IILESGNVND…KASQLYLTPE (170 aa)) constitute a propeptide that is removed on maturation. Positions 197 to 395 (RYVKLAIVVD…YKPQCILNAP (199 aa)) constitute a Peptidase M12B domain. 3 cysteine pairs are disulfide-bonded: Cys-308–Cys-390, Cys-352–Cys-374, and Cys-354–Cys-357. Position 333 (His-333) interacts with Zn(2+). Glu-334 is a catalytic residue. Zn(2+) is bound by residues His-337 and His-343. The propeptide occupies 396 to 411 (LRTDTVSTPVSGNELL). In terms of domain architecture, Disintegrin spans 403-483 (TPVSGNELLE…SDDCPRWNDL (81 aa)). Disulfide bonds link Cys-417/Cys-432, Cys-419/Cys-427, Cys-426/Cys-449, Cys-440/Cys-446, Cys-445/Cys-470, and Cys-458/Cys-477. Positions 462–464 (RGD) match the Cell attachment site motif.

The protein belongs to the venom metalloproteinase (M12B) family. P-II subfamily. P-IIa sub-subfamily. Monomer. Requires Zn(2+) as cofactor. As to expression, expressed by the venom gland.

The protein localises to the secreted. In terms of biological role, impairs hemostasis in the envenomed animal. Its function is as follows. Inhibits ADP- and collagen-induced human platelet aggregation with IC(50) of 123 and 135 nM, respectively. Inhibits sperm-egg binding in a concentration-dependent manner, but has no effect on the fusion of sperm-egg. The chain is Zinc metalloproteinase/disintegrin from Protobothrops jerdonii (Jerdon's pitviper).